Consider the following 380-residue polypeptide: Erythronate-4-phosphate dehydrogenase (380 aa).

Substrate is bound by residues serine 45 and threonine 66. NAD(+)-binding positions include 126-127 (QV), aspartate 146, threonine 175, 206-208 (ASR), and aspartate 232. Residue arginine 208 is part of the active site. The active site involves glutamate 237. Histidine 254 serves as the catalytic Proton donor. Residue glycine 257 coordinates NAD(+). A substrate-binding site is contributed by tyrosine 258.

Belongs to the D-isomer specific 2-hydroxyacid dehydrogenase family. PdxB subfamily. In terms of assembly, homodimer.

It is found in the cytoplasm. The enzyme catalyses 4-phospho-D-erythronate + NAD(+) = (R)-3-hydroxy-2-oxo-4-phosphooxybutanoate + NADH + H(+). Its pathway is cofactor biosynthesis; pyridoxine 5'-phosphate biosynthesis; pyridoxine 5'-phosphate from D-erythrose 4-phosphate: step 2/5. Functionally, catalyzes the oxidation of erythronate-4-phosphate to 3-hydroxy-2-oxo-4-phosphonooxybutanoate. This Pseudomonas aeruginosa (strain UCBPP-PA14) protein is Erythronate-4-phosphate dehydrogenase.